The sequence spans 161 residues: SsrA-binding protein (161 aa).

The tract at residues 137–161 (HDKRTDSKEKDWNRDKARIMKSSLR) is disordered. Basic and acidic residues predominate over residues 139–154 (KRTDSKEKDWNRDKAR).

Belongs to the SmpB family.

The protein localises to the cytoplasm. Required for rescue of stalled ribosomes mediated by trans-translation. Binds to transfer-messenger RNA (tmRNA), required for stable association of tmRNA with ribosomes. tmRNA and SmpB together mimic tRNA shape, replacing the anticodon stem-loop with SmpB. tmRNA is encoded by the ssrA gene; the 2 termini fold to resemble tRNA(Ala) and it encodes a 'tag peptide', a short internal open reading frame. During trans-translation Ala-aminoacylated tmRNA acts like a tRNA, entering the A-site of stalled ribosomes, displacing the stalled mRNA. The ribosome then switches to translate the ORF on the tmRNA; the nascent peptide is terminated with the 'tag peptide' encoded by the tmRNA and targeted for degradation. The ribosome is freed to recommence translation, which seems to be the essential function of trans-translation. This Aliivibrio salmonicida (strain LFI1238) (Vibrio salmonicida (strain LFI1238)) protein is SsrA-binding protein.